Here is a 203-residue protein sequence, read N- to C-terminus: Peptide deformylase (203 aa).

2 residues coordinate Fe cation: cysteine 130 and histidine 173. Glutamate 174 is an active-site residue. A Fe cation-binding site is contributed by histidine 177.

Belongs to the polypeptide deformylase family. Requires Fe(2+) as cofactor.

It carries out the reaction N-terminal N-formyl-L-methionyl-[peptide] + H2O = N-terminal L-methionyl-[peptide] + formate. Its function is as follows. Removes the formyl group from the N-terminal Met of newly synthesized proteins. Requires at least a dipeptide for an efficient rate of reaction. N-terminal L-methionine is a prerequisite for activity but the enzyme has broad specificity at other positions. This Streptococcus pneumoniae serotype 19F (strain G54) protein is Peptide deformylase.